The chain runs to 156 residues: Small ribosomal subunit protein uS7 (156 aa).

This sequence belongs to the universal ribosomal protein uS7 family. Part of the 30S ribosomal subunit. Contacts proteins S9 and S11.

Its function is as follows. One of the primary rRNA binding proteins, it binds directly to 16S rRNA where it nucleates assembly of the head domain of the 30S subunit. Is located at the subunit interface close to the decoding center, probably blocks exit of the E-site tRNA. This is Small ribosomal subunit protein uS7 from Shewanella sediminis (strain HAW-EB3).